The following is a 911-amino-acid chain: Golgin IMH1 (911 aa).

2 disordered regions span residues 16 to 41 (LAKGLADDMSPTPSEQQIEDDKSGLP) and 271 to 314 (KELP…ETVD). Residues 101-280 (FFQDLNNKNN…KELPKAISHQ (180 aa)) are a coiled coil. Residues 286–299 (NRRKKNRNKGKKNK) show a composition bias toward basic residues. A phosphoserine mark is found at serine 308 and serine 660. Coiled coils occupy residues 312 to 735 (TVDN…ALKH) and 766 to 814 (SKAD…KERQ). The tract at residues 814–850 (QYSDKSGRVSRSGSIGTLANANIDSSPANNSNPTKLE) is disordered. Residues 822-847 (VSRSGSIGTLANANIDSSPANNSNPT) are compositionally biased toward polar residues. Serine 827 is subject to Phosphoserine. Phosphothreonine is present on threonine 830. The GRIP domain maps to 861 to 909 (DSEKNEKIAYIKNVLLGFLEHKEQRNQLLPVISMLLQLDSTDEKRLVMS).

In terms of assembly, forms oligomers and is present in high-molecular-mass complexes. Interacts with ARL1.

The protein localises to the cytoplasm. It localises to the golgi apparatus membrane. Its function is as follows. Involved in vesicular transport between an endosomal compartment and the Golgi apparatus. In Saccharomyces cerevisiae (strain ATCC 204508 / S288c) (Baker's yeast), this protein is Golgin IMH1 (IMH1).